The chain runs to 3674 residues: Spectrin beta chain, non-erythrocytic 5 (3674 aa).

Residues 1–37 form a disordered region; sequence MAGQPHSPRELLGAAGHRSRRPSTELRVPPSPSLTMD. The segment at 1 to 279 is actin-binding; sequence MAGQPHSPRE…IMTYVSLYYH (279 aa). Calponin-homology (CH) domains lie at 54–159 and 177–282; these read QMQE…LRFQ and LSTK…HYCS. 8 Spectrin repeats span residues 307-416, 428-529, 642-742, 747-810, 900-996, 1103-1206, 1209-1311, and 1315-1417; these read LQTQ…ALQQ, ARRF…RKQV, AEFL…ARLQ, VLQY…QGRA, GFCS…AVQL, ARQS…WLQE, ELQK…RQLL, and QLQE…ELQQ. Residues 1441-1469 are disordered; sequence ALQSSETGQDLRSSQRLQKRHQQLESESR. Residues 1442-1456 show a composition bias toward polar residues; the sequence is LQSSETGQDLRSSQR. 19 Spectrin repeats span residues 1521 to 1624, 1628 to 1727, 1731 to 1835, 1842 to 1940, 1944 to 2046, 2052 to 2146, 2150 to 2253, 2256 to 2361, 2366 to 2467, 2471 to 2574, 2577 to 2680, 2683 to 2784, 2791 to 2890, 2894 to 2997, 3000 to 3103, 3106 to 3209, 3213 to 3311, 3318 to 3415, and 3422 to 3488; these read ELHQ…CLQQ, FQQY…RELE, RLHE…ALRD, VHRD…AQLE, LLAR…ERLQ, QLFL…HALH, LMAS…ELED, NFLE…QQLE, IHVL…EALD, QAQK…QLQQ, ELQL…RLEE, QLQA…AKLQ, RLRR…TALE, LLLK…LLQQ, EAQQ…GLQE, QLHQ…ENLA, EVHS…QWLA, AFLG…RWQR, and LQKL…EQEL. The PH domain maps to 3533 to 3641; sequence TPTMEGSLEF…WWRALGSTAA (109 aa).

This sequence belongs to the spectrin family. Probably associates with an alpha chain. Interacts (via C-terminus) with TRPC4. Expressed at very low levels in many tissues, with strongest expression in cerebellum, spinal cord, stomach, pituitary gland, liver, pancreas, salivary gland, kidney, bladder, and heart.

It localises to the cytoplasm. The protein localises to the cytoskeleton. The polypeptide is Spectrin beta chain, non-erythrocytic 5 (SPTBN5) (Homo sapiens (Human)).